Here is a 452-residue protein sequence, read N- to C-terminus: Enolase (452 aa).

Position 167 (Q167) interacts with (2R)-2-phosphoglycerate. Catalysis depends on E209, which acts as the Proton donor. Residues D250, E307, and D334 each coordinate Mg(2+). K359, R388, S389, and K410 together coordinate (2R)-2-phosphoglycerate. The active-site Proton acceptor is the K359.

This sequence belongs to the enolase family. Mg(2+) serves as cofactor.

Its subcellular location is the cytoplasm. The protein resides in the secreted. It is found in the cell surface. It carries out the reaction (2R)-2-phosphoglycerate = phosphoenolpyruvate + H2O. It functions in the pathway carbohydrate degradation; glycolysis; pyruvate from D-glyceraldehyde 3-phosphate: step 4/5. In terms of biological role, catalyzes the reversible conversion of 2-phosphoglycerate (2-PG) into phosphoenolpyruvate (PEP). It is essential for the degradation of carbohydrates via glycolysis. The protein is Enolase of Mesomycoplasma hyopneumoniae (strain 232) (Mycoplasma hyopneumoniae).